The following is a 272-amino-acid chain: Tryptophan synthase alpha chain (272 aa).

Catalysis depends on proton acceptor residues glutamate 49 and aspartate 60.

Belongs to the TrpA family. As to quaternary structure, tetramer of two alpha and two beta chains.

It carries out the reaction (1S,2R)-1-C-(indol-3-yl)glycerol 3-phosphate + L-serine = D-glyceraldehyde 3-phosphate + L-tryptophan + H2O. The protein operates within amino-acid biosynthesis; L-tryptophan biosynthesis; L-tryptophan from chorismate: step 5/5. Its function is as follows. The alpha subunit is responsible for the aldol cleavage of indoleglycerol phosphate to indole and glyceraldehyde 3-phosphate. In Hydrogenovibrio crunogenus (strain DSM 25203 / XCL-2) (Thiomicrospira crunogena), this protein is Tryptophan synthase alpha chain.